We begin with the raw amino-acid sequence, 1071 residues long: ATP-dependent helicase/deoxyribonuclease subunit B (1071 aa).

Belongs to the helicase family. AddB/RexB type 2 subfamily. Heterodimer of AddA and RexB. Mg(2+) is required as a cofactor.

Functionally, the heterodimer acts as both an ATP-dependent DNA helicase and an ATP-dependent, dual-direction single-stranded exonuclease. Recognizes the chi site generating a DNA molecule suitable for the initiation of homologous recombination. This subunit has 5' -&gt; 3' nuclease activity but not helicase activity. The polypeptide is ATP-dependent helicase/deoxyribonuclease subunit B (Streptococcus pyogenes serotype M12 (strain MGAS2096)).